The primary structure comprises 93 residues: UPF0367 protein ssl1972 (93 aa).

The protein belongs to the UPF0367 family.

The sequence is that of UPF0367 protein ssl1972 from Synechocystis sp. (strain ATCC 27184 / PCC 6803 / Kazusa).